A 69-amino-acid chain; its full sequence is Protein transport protein Sec61 subunit gamma (69 aa).

At 1-32 the chain is on the cytoplasmic side; sequence MDAVDSVVDPLREFAKDSVRLVKRCHKPDRKE. A helical membrane pass occupies residues 33 to 61; it reads FTKVAARTAIGFVVMGFVGFFVKLIFIPI. The Extracellular portion of the chain corresponds to 62 to 69; sequence NNIIVGSG.

It belongs to the SecE/SEC61-gamma family. In terms of assembly, heterotrimeric complex composed of SEC61-alpha, SEC61-beta and SEC61-gamma.

The protein localises to the endoplasmic reticulum membrane. Functionally, necessary for protein translocation in the endoplasmic reticulum. This chain is Protein transport protein Sec61 subunit gamma, found in Oryza sativa subsp. japonica (Rice).